Here is a 232-residue protein sequence, read N- to C-terminus: 2-C-methyl-D-erythritol 4-phosphate cytidylyltransferase (232 aa).

Belongs to the IspD/TarI cytidylyltransferase family. IspD subfamily.

It carries out the reaction 2-C-methyl-D-erythritol 4-phosphate + CTP + H(+) = 4-CDP-2-C-methyl-D-erythritol + diphosphate. It participates in isoprenoid biosynthesis; isopentenyl diphosphate biosynthesis via DXP pathway; isopentenyl diphosphate from 1-deoxy-D-xylulose 5-phosphate: step 2/6. Functionally, catalyzes the formation of 4-diphosphocytidyl-2-C-methyl-D-erythritol from CTP and 2-C-methyl-D-erythritol 4-phosphate (MEP). This chain is 2-C-methyl-D-erythritol 4-phosphate cytidylyltransferase, found in Stenotrophomonas maltophilia (strain R551-3).